The primary structure comprises 377 residues: Prostaglandin reductase-3 (377 aa).

At Lys35 the chain carries N6-acetyllysine. NADP(+) contacts are provided by Thr185, Ser205, Lys209, Tyr224, Ser247, Ile269, and Tyr275. At Ser299 the chain carries Phosphoserine. NADP(+) contacts are provided by residues 303 to 305 (FFL) and Asn361.

This sequence belongs to the zinc-containing alcohol dehydrogenase family. Quinone oxidoreductase subfamily.

Its subcellular location is the peroxisome. The catalysed reaction is 13,14-dihydro-15-oxo-prostaglandin E2 + NADP(+) = 15-oxoprostaglandin E2 + NADPH + H(+). It catalyses the reaction 13,14-dihydro-15-oxo-prostaglandin E1 + NADP(+) = 15-oxoprostaglandin E1 + NADPH + H(+). It carries out the reaction 13,14-dihydro-15-oxo-PGF2alpha + NADP(+) = 15-oxoprostaglandin F2alpha + NADPH + H(+). The enzyme catalyses 13,14-dihydro-15-oxo-prostaglandin F1alpha + NADP(+) = 15-oxoprostaglandin F1alpha + NADPH + H(+). Functionally, functions as 15-oxo-prostaglandin 13-reductase and acts on 15-keto-PGE1, 15-keto-PGE2, 15-keto-PGE1-alpha and 15-keto-PGE2-alpha with highest efficiency towards 15-keto-PGE2-alpha. Overexpression represses transcriptional activity of PPARG and inhibits adipocyte differentiation. The protein is Prostaglandin reductase-3 (PTGR3) of Bos taurus (Bovine).